The chain runs to 1441 residues: Lysophospholipase NTE1 (1441 aa).

Residues 1 to 22 (MWLTSYVLPRLKNILLLQFHIT) are Lumenal-facing. Residues 23-43 (LPLNYLVLLLLSTVIITYLFL) traverse the membrane as a helical segment. At 44–1441 (RTRILSNYSQ…ENMLQRRNSI (1398 aa)) the chain is on the cytoplasmic side. 4 disordered regions span residues 154 to 173 (SNPS…PSND), 210 to 236 (THLN…TGEI), 376 to 445 (QDDT…NSSS), and 551 to 585 (NRTG…HFRN). Residues 376–388 (QDDTGSSASTIQK) show a composition bias toward polar residues. Over residues 572-585 (SRTDRSESFDHFRN) the composition is skewed to basic and acidic residues. Residues 592–718 (NQFS…LTNS) and 707–836 (IYLK…VAKK) contribute to the a nucleoside 3',5'-cyclic phosphate site. A PNPLA domain is found at 1137–1301 (LVLGGGGARG…VDNLPVTEMT (165 aa)). A GXGXXG motif is present at residues 1141–1146 (GGGARG). Residues 1168–1172 (GTSIG) carry the GXSXG motif. Catalysis depends on Ser-1170, which acts as the Nucleophile. The active-site Proton acceptor is Asp-1288. Positions 1288 to 1290 (DGG) match the DGA/G motif.

The protein belongs to the NTE family.

Its subcellular location is the endoplasmic reticulum membrane. It carries out the reaction a 1-acyl-sn-glycero-3-phosphocholine + H2O = sn-glycerol 3-phosphocholine + a fatty acid + H(+). Its activity is regulated as follows. Inhibited by organophosphorus esters. In terms of biological role, intracellular phospholipase B that catalyzes the double deacylation of phosphatidylcholine (PC) to glycerophosphocholine (GroPCho). Plays an important role in membrane lipid homeostasis. Responsible for the rapid PC turnover in response to inositol, elevated temperatures, or when choline is present in the growth medium. This is Lysophospholipase NTE1 (NTE1) from Kluyveromyces lactis (strain ATCC 8585 / CBS 2359 / DSM 70799 / NBRC 1267 / NRRL Y-1140 / WM37) (Yeast).